The primary structure comprises 99 residues: MVLAMLGALHPRAGLSLFALYLVLAAALLRPQPLRPQRAVPEEFSAPLELSAPLSGLVDDYGVRPKHPWPRGPRPLLSRAQQRKRDGPDMAEYYYDSRL.

The chain crosses the membrane as a helical span at residues 13–29; sequence AGLSLFALYLVLAAALL. The tract at residues 64 to 90 is disordered; sequence RPKHPWPRGPRPLLSRAQQRKRDGPDM.

In terms of assembly, interacts with SPPL2C (via active sites); the interaction stabilizes FREY1 protein and inhibits SPPL2C proteolytic activity. Interacts with IZUMO1; the interaction retains IZUMO1 at the endoplasmic reticulum membrane and coordinates IZUMO1 complex assembly.

The protein localises to the endoplasmic reticulum membrane. Functionally, key regulator for male fertility expressed transiently in round spermatids where it recruits IZUMO1 at the endoplasmic reticulum (ER) membrane and coordinates the oolemmal binding multimeric complex (IZUMO1 complex) assembly. Upon complete assembly of the IZUMO1 complex, its ER retention is released, facilitating IZUMO1 complex export to the acrosome. Through the interaction with SPPL2C, inhibits its intramembrane protease activity directly accessing the catalytic center of an I-CLiP. In Bos taurus (Bovine), this protein is Protein Frey (FREY1).